Reading from the N-terminus, the 130-residue chain is Small ribosomal subunit protein uS9 (130 aa).

This sequence belongs to the universal ribosomal protein uS9 family.

This Thiobacillus denitrificans (strain ATCC 25259 / T1) protein is Small ribosomal subunit protein uS9.